The sequence spans 705 residues: Elongation factor G (705 aa).

Residues 8-291 form the tr-type G domain; the sequence is EKVRNIGIMA…AVVEYLPSPI (284 aa). GTP contacts are provided by residues 17–24, 90–94, and 144–147; these read AHIDAGKT, DTPGH, and NKMD.

Belongs to the TRAFAC class translation factor GTPase superfamily. Classic translation factor GTPase family. EF-G/EF-2 subfamily.

It localises to the cytoplasm. Its function is as follows. Catalyzes the GTP-dependent ribosomal translocation step during translation elongation. During this step, the ribosome changes from the pre-translocational (PRE) to the post-translocational (POST) state as the newly formed A-site-bound peptidyl-tRNA and P-site-bound deacylated tRNA move to the P and E sites, respectively. Catalyzes the coordinated movement of the two tRNA molecules, the mRNA and conformational changes in the ribosome. This is Elongation factor G from Chloroherpeton thalassium (strain ATCC 35110 / GB-78).